The following is a 1404-amino-acid chain: ABC transporter G family member 47 (1404 aa).

The region spanning 156 to 423 is the ABC transporter 1 domain; the sequence is GNALHITRKK…FQSIGFKCPE (268 aa). Position 189-196 (189-196) interacts with ATP; that stretch reads GPPGSGKT. Residues 501 to 714 enclose the ABC transmembrane type-2 1 domain; the sequence is ELLQANIDRE…ALNTLAVNEF (214 aa). The next 7 helical transmembrane spans lie at 519–539, 565–585, 607–627, 638–658, 663–683, 692–712, and 751–771; these read FLYI…MTVF, MIMF…PVFF, TPIS…VIGF, FLAL…IASL, VVAS…SGFI, WWIW…LAVN, and VGAL…CLIF. Residues 808–1059 form the ABC transporter 2 domain; the sequence is ITFEDIKYSI…ELIRYFEAIE (252 aa). 852–859 serves as a coordination point for ATP; it reads GVSGAGKT. An ABC transmembrane type-2 2 domain is found at 1132 to 1346; the sequence is TQCLACLWKQ…TLNGLVTSQF (215 aa). The next 7 helical transmembrane spans lie at 1152–1172, 1183–1199, 1239–1259, 1266–1286, 1298–1318, 1321–1341, and 1373–1393; these read IAVK…MFWG, LFSA…TMGV, LPYI…MIGY, FFWY…YGMM, TVVS…LIPL, IPIW…LNGL, and LLWV…FLFG.

The protein belongs to the ABC transporter superfamily. ABCG family. PDR (TC 3.A.1.205) subfamily.

It localises to the membrane. Functionally, may be a general defense protein. This Oryza sativa subsp. japonica (Rice) protein is ABC transporter G family member 47.